The chain runs to 460 residues: Bifunctional protein GlmU (460 aa).

The segment at 1 to 229 (MTNYAIILAA…FNESLGVNDR (229 aa)) is pyrophosphorylase. Residues 8 to 11 (LAAG), lysine 22, glutamine 72, and 77 to 78 (GT) each bind UDP-N-acetyl-alpha-D-glucosamine. Aspartate 102 serves as a coordination point for Mg(2+). Glycine 139, glutamate 154, asparagine 169, and asparagine 227 together coordinate UDP-N-acetyl-alpha-D-glucosamine. Asparagine 227 provides a ligand contact to Mg(2+). The linker stretch occupies residues 230–250 (VALATAETVMRQRITQKHMVN). Positions 251 to 460 (GVTFQNPETV…RLAHHPSRSK (210 aa)) are N-acetyltransferase. Arginine 332 and lysine 350 together coordinate UDP-N-acetyl-alpha-D-glucosamine. Histidine 362 serves as the catalytic Proton acceptor. UDP-N-acetyl-alpha-D-glucosamine is bound by residues tyrosine 365 and asparagine 376. Residues alanine 379, 385 to 386 (NY), serine 404, alanine 422, and arginine 439 each bind acetyl-CoA.

This sequence in the N-terminal section; belongs to the N-acetylglucosamine-1-phosphate uridyltransferase family. The protein in the C-terminal section; belongs to the transferase hexapeptide repeat family. As to quaternary structure, homotrimer. Mg(2+) is required as a cofactor.

The protein localises to the cytoplasm. The catalysed reaction is alpha-D-glucosamine 1-phosphate + acetyl-CoA = N-acetyl-alpha-D-glucosamine 1-phosphate + CoA + H(+). The enzyme catalyses N-acetyl-alpha-D-glucosamine 1-phosphate + UTP + H(+) = UDP-N-acetyl-alpha-D-glucosamine + diphosphate. It participates in nucleotide-sugar biosynthesis; UDP-N-acetyl-alpha-D-glucosamine biosynthesis; N-acetyl-alpha-D-glucosamine 1-phosphate from alpha-D-glucosamine 6-phosphate (route II): step 2/2. It functions in the pathway nucleotide-sugar biosynthesis; UDP-N-acetyl-alpha-D-glucosamine biosynthesis; UDP-N-acetyl-alpha-D-glucosamine from N-acetyl-alpha-D-glucosamine 1-phosphate: step 1/1. Its pathway is bacterial outer membrane biogenesis; LPS lipid A biosynthesis. In terms of biological role, catalyzes the last two sequential reactions in the de novo biosynthetic pathway for UDP-N-acetylglucosamine (UDP-GlcNAc). The C-terminal domain catalyzes the transfer of acetyl group from acetyl coenzyme A to glucosamine-1-phosphate (GlcN-1-P) to produce N-acetylglucosamine-1-phosphate (GlcNAc-1-P), which is converted into UDP-GlcNAc by the transfer of uridine 5-monophosphate (from uridine 5-triphosphate), a reaction catalyzed by the N-terminal domain. This chain is Bifunctional protein GlmU, found in Streptococcus pyogenes serotype M6 (strain ATCC BAA-946 / MGAS10394).